Consider the following 366-residue polypeptide: UDP-N-acetylenolpyruvoylglucosamine reductase (366 aa).

Residues 27–197 enclose the FAD-binding PCMH-type domain; sequence LGGPAAGFVV…LRVRFLLRDG (171 aa). R175 is an active-site residue. S252 serves as the catalytic Proton donor. E358 is an active-site residue.

It belongs to the MurB family. FAD is required as a cofactor.

It localises to the cytoplasm. It carries out the reaction UDP-N-acetyl-alpha-D-muramate + NADP(+) = UDP-N-acetyl-3-O-(1-carboxyvinyl)-alpha-D-glucosamine + NADPH + H(+). It participates in cell wall biogenesis; peptidoglycan biosynthesis. Cell wall formation. In Saccharopolyspora erythraea (strain ATCC 11635 / DSM 40517 / JCM 4748 / NBRC 13426 / NCIMB 8594 / NRRL 2338), this protein is UDP-N-acetylenolpyruvoylglucosamine reductase.